The primary structure comprises 953 residues: Kinesin-like protein KIF23 (953 aa).

The Nuclear localization signal signature appears at 7–11 (KTVRK). Residues 25–436 (PVGVYCRVRP…MRFAEVTQEV (412 aa)) form the Kinesin motor domain. An ATP-binding site is contributed by 112–119 (GVTGSGKT). Ser-155 and Ser-160 each carry phosphoserine. The stretch at 542-618 (QEKLNEREKV…RRLEARLQGM (77 aa)) forms a coiled coil. Residues Lys-572 and Lys-587 each participate in a glycyl lysine isopeptide (Lys-Gly) (interchain with G-Cter in SUMO2) cross-link. Ser-606 is modified (phosphoserine). Residues Lys-625, Lys-648, Lys-663, and Lys-666 each participate in a glycyl lysine isopeptide (Lys-Gly) (interchain with G-Cter in SUMO2) cross-link. The tract at residues 658 to 695 (IVTEPKPEKPERPSRERDREKIIPRSVSPSPLPLSSNN) is disordered. Residues 662 to 680 (PKPEKPERPSRERDREKII) are compositionally biased toward basic and acidic residues. The segment covering 681–693 (PRSVSPSPLPLSS) has biased composition (low complexity). Phosphoserine occurs at positions 683 and 685. At Thr-739 the chain carries Phosphothreonine. Position 807 is a phosphoserine (Ser-807). Glycyl lysine isopeptide (Lys-Gly) (interchain with G-Cter in SUMO2) cross-links involve residues Lys-816 and Lys-847. Position 860 is a phosphoserine (Ser-860). Residues Lys-867, Lys-870, and Lys-892 each participate in a glycyl lysine isopeptide (Lys-Gly) (interchain with G-Cter in SUMO2) cross-link. 2 disordered regions span residues 894-921 (ELPT…EWTD) and 934-953 (AGSQ…RKKP). Ser-904 is subject to Phosphoserine. Thr-920 is modified (phosphothreonine). A Glycyl lysine isopeptide (Lys-Gly) (interchain with G-Cter in SUMO2) cross-link involves residue Lys-949.

It belongs to the TRAFAC class myosin-kinesin ATPase superfamily. Kinesin family. In terms of assembly, heterotetramer of two molecules each of RACGAP1 and KIF23. Found in the centralspindlin complex. Interacts with RACGAP1; the interaction is direct. Interacts with ECT2 and PRC1. Interacts with ANXA11 during cytokinesis. Interacts with BIRC6/bruce and USP8/UBPY. Interacts with ARF6, forming heterodimers and heterotetramers. In terms of processing, ubiquitinated. Deubiquitinated by USP8/UBPY. Detected in testis and ovary from newborn mice (at protein level). Detected in brain, spinal cord and small intestine.

The protein resides in the nucleus. Its subcellular location is the cytoplasm. It localises to the cytoskeleton. It is found in the spindle. The protein localises to the midbody. The protein resides in the midbody ring. Functionally, component of the centralspindlin complex that serves as a microtubule-dependent and Rho-mediated signaling required for the myosin contractile ring formation during the cell cycle cytokinesis. Essential for cytokinesis in Rho-mediated signaling. Required for the localization of ECT2 to the central spindle. Plus-end-directed motor enzyme that moves antiparallel microtubules in vitro. In Mus musculus (Mouse), this protein is Kinesin-like protein KIF23 (Kif23).